The primary structure comprises 82 residues: Nuclear protein 1 (82 aa).

The segment at 1 to 82 (MATFPPATSA…SERKKRGARR (82 aa)) is disordered. A compositionally biased stretch (acidic residues) spans 17–28 (PEDEDSSLDESD). The short motif at 65–82 (KLVTKLQNSERKKRGARR) is the Nuclear localization signal element.

The protein belongs to the NUPR family. As to quaternary structure, monomer. Directly interacts with MSL1 and binds MORF4L1, two components of histone acetyltransferase complex; the interaction with MORF4L1 may be mediated by MSL1. Interacts with EP300; this interaction enhances the effect of EP300 on PAX2 transcription factor activity. Interacts with PAXIP1; this interaction prevents PAXIP1 inhibition of PAX2 transcription factor activity. Interacts with COPS5; this interaction allows COPS5-dependent CDKN1B nuclear to cytoplasm translocation. Interacts with RNF2. Interacts with FOXO3; this interaction represses FOXO3 transactivation. Interacts with PTMA; negatively regulates apoptotic process. Interacts with MYOD1, EP300 and DDX5; this interaction coordinates the association of anti-proliferative and pro-myogenic proteins at the myogenin promoter. Interacts with TP53; interaction is stress-dependent. Forms a complex with EP300 and TP53; this complex binds CDKN1A promoter leading to transcriptional induction of CDKN1A. In terms of processing, phosphorylated in vitro by PKA and CK. Phosphorylation promotes DNA-binding activity. Post-translationally, acetylated by EP300 in vitro. Widely expressed, with high levels in liver, pancreas, prostate, ovary, colon, thyroid, spinal cord, trachea and adrenal gland, moderate levels in heart, placenta, lung, skeletal muscle, kidney, testis, small intestine, stomach and lymph node, and low levels in brain, spleen, thymus and bone marrow. Not detected in peripheral blood leukocytes.

The protein localises to the nucleus. It is found in the cytoplasm. The protein resides in the perinuclear region. In terms of biological role, transcription regulator that converts stress signals into a program of gene expression that empowers cells with resistance to the stress induced by a change in their microenvironment. Thereby participates in the regulation of many processes namely cell-cycle, apoptosis, autophagy and DNA repair responses. Controls cell cycle progression and protects cells from genotoxic stress induced by doxorubicin through the complex formation with TP53 and EP300 that binds CDKN1A promoter leading to transcriptional induction of CDKN1A. Protects pancreatic cancer cells from stress-induced cell death by binding the RELB promoter and activating its transcription, leading to IER3 transactivation. Negatively regulates apoptosis through interaction with PTMA. Inhibits autophagy-induced apoptosis in cardiac cells through FOXO3 interaction, inducing cytoplasmic translocation of FOXO3 thereby preventing the FOXO3 association with the pro-autophagic BNIP3 promoter. Inhibits cell growth and facilitates programmed cell death by apoptosis after adriamycin-induced DNA damage through transactivation of TP53. Regulates methamphetamine-induced apoptosis and autophagy through DDIT3-mediated endoplasmic reticulum stress pathway. Participates in DNA repair following gamma-irradiation by facilitating DNA access of the transcription machinery through interaction with MSL1 leading to inhibition of histone H4' Lys-16' acetylation (H4K16ac). Coactivator of PAX2 transcription factor activity, both by recruiting EP300 to increase PAX2 transcription factor activity and by binding PAXIP1 to suppress PAXIP1-induced inhibition on PAX2. Positively regulates cell cycle progression through interaction with COPS5 inducing cytoplasmic translocation of CDKN1B leading to the CDKN1B degradation. Coordinates, through its interaction with EP300, the assiociation of MYOD1, EP300 and DDX5 to the MYOG promoter, leading to inhibition of cell-cycle progression and myogenic differentiation promotion. Negatively regulates beta cell proliferation via inhibition of cell-cycle regulatory genes expression through the suppression of their promoter activities. Also required for LHB expression and ovarian maturation. Exacerbates CNS inflammation and demyelination upon cuprizone treatment. The chain is Nuclear protein 1 from Homo sapiens (Human).